Reading from the N-terminus, the 101-residue chain is NAD(P)H-quinone oxidoreductase subunit 4L, chloroplastic (101 aa).

A run of 3 helical transmembrane segments spans residues M2 to I22, M32 to F52, and I61 to V81.

Belongs to the complex I subunit 4L family. NDH is composed of at least 16 different subunits, 5 of which are encoded in the nucleus.

Its subcellular location is the plastid. It is found in the chloroplast thylakoid membrane. The enzyme catalyses a plastoquinone + NADH + (n+1) H(+)(in) = a plastoquinol + NAD(+) + n H(+)(out). It catalyses the reaction a plastoquinone + NADPH + (n+1) H(+)(in) = a plastoquinol + NADP(+) + n H(+)(out). In terms of biological role, NDH shuttles electrons from NAD(P)H:plastoquinone, via FMN and iron-sulfur (Fe-S) centers, to quinones in the photosynthetic chain and possibly in a chloroplast respiratory chain. The immediate electron acceptor for the enzyme in this species is believed to be plastoquinone. Couples the redox reaction to proton translocation, and thus conserves the redox energy in a proton gradient. The polypeptide is NAD(P)H-quinone oxidoreductase subunit 4L, chloroplastic (Daucus carota (Wild carrot)).